Here is a 105-residue protein sequence, read N- to C-terminus: Cyclotide vibi-J (105 aa).

Residues 1-9 (AAFALPALA) form the signal peptide. A propeptide spanning residues 10–71 (TSFEKDFITH…KSSNSINALG (62 aa)) is cleaved from the precursor. A cross-link (cyclopeptide (Gly-Asn)) is located at residues 72 to 102 (GTFPCGESCVWIPCISKVIGCACKSKVCYKN). Disulfide bonds link cysteine 76-cysteine 92, cysteine 80-cysteine 94, and cysteine 85-cysteine 99. Residues 103–105 (SLA) constitute a propeptide that is removed on maturation.

Post-translationally, this is a cyclic peptide.

Its function is as follows. Probably participates in a plant defense mechanism. The chain is Cyclotide vibi-J from Viola biflora (Yellow wood violet).